Here is a 561-residue protein sequence, read N- to C-terminus: Delta(24)-sterol reductase (561 aa).

Over 1–25 the chain is Lumenal; sequence MSDLQTPLVRPKRKKTWVDYFVKFR. Phosphoserine is present on serine 2. A helical; Signal-anchor transmembrane segment spans residues 26 to 46; the sequence is WIIVIFIVLPFSATFYFLIYL. Over 47-561 the chain is Cytoplasmic; that stretch reads GDMWSESKSF…HLETAYAEAD (515 aa). One can recognise an FAD-binding PCMH-type domain in the interval 49–232; sequence MWSESKSFEK…VAAEIRLIKV (184 aa). An interaction with calmodulin region spans residues 518 to 539; sequence CRKKYRAIGTFMSVYYKSKKGR.

This sequence belongs to the DIMINUTO family. Interacts with calmodulin.

The protein localises to the microsome membrane. It catalyses the reaction lathosterol + NADP(+) = 5alpha-cholesta-7,24-dien-3beta-ol + NADPH + H(+). Its function is as follows. Plays a critical role in the general process of plant cell elongation. Involved in the synthesis of campesterol, an early precursor of brassinolide. Required for the conversion of 24-methylenecholesterol to campesterol and for the conversion of isofucosterol to sitosterol. Necessary for both the isomerization and reduction of 24-methylenecholesterol. Regulates indirectly phytochrome-mediated light responses through the modulation of brassinosteroid biosynthesis. The sequence is that of Delta(24)-sterol reductase (DIM) from Arabidopsis thaliana (Mouse-ear cress).